We begin with the raw amino-acid sequence, 927 residues long: Phosphoenolpyruvate carboxylase (927 aa).

Catalysis depends on residues His160 and Lys589.

Belongs to the PEPCase type 1 family. Mg(2+) is required as a cofactor.

It catalyses the reaction oxaloacetate + phosphate = phosphoenolpyruvate + hydrogencarbonate. Its function is as follows. Forms oxaloacetate, a four-carbon dicarboxylic acid source for the tricarboxylic acid cycle. In Rhodopseudomonas palustris (strain BisA53), this protein is Phosphoenolpyruvate carboxylase.